The primary structure comprises 430 residues: Glutamate-1-semialdehyde 2,1-aminomutase (430 aa).

N6-(pyridoxal phosphate)lysine is present on Lys265.

Belongs to the class-III pyridoxal-phosphate-dependent aminotransferase family. HemL subfamily. As to quaternary structure, homodimer. The cofactor is pyridoxal 5'-phosphate.

It is found in the cytoplasm. It catalyses the reaction (S)-4-amino-5-oxopentanoate = 5-aminolevulinate. It functions in the pathway porphyrin-containing compound metabolism; protoporphyrin-IX biosynthesis; 5-aminolevulinate from L-glutamyl-tRNA(Glu): step 2/2. The polypeptide is Glutamate-1-semialdehyde 2,1-aminomutase (hemL) (Helicobacter pylori (strain J99 / ATCC 700824) (Campylobacter pylori J99)).